The sequence spans 196 residues: Phosphoheptose isomerase (196 aa).

One can recognise an SIS domain in the interval 34–196; the sequence is MVQCLLGGKK…DRTLFPQDEA (163 aa). Position 49-51 (49-51) interacts with substrate; that stretch reads NGG. Zn(2+) contacts are provided by H58 and E62. Substrate contacts are provided by residues E62, 91–92, 117–119, S122, and Q172; these read ND and STS. Residues Q172 and H180 each contribute to the Zn(2+) site.

The protein belongs to the SIS family. GmhA subfamily. In terms of assembly, homotetramer. Zn(2+) serves as cofactor.

It is found in the cytoplasm. It catalyses the reaction 2 D-sedoheptulose 7-phosphate = D-glycero-alpha-D-manno-heptose 7-phosphate + D-glycero-beta-D-manno-heptose 7-phosphate. The protein operates within carbohydrate biosynthesis; D-glycero-D-manno-heptose 7-phosphate biosynthesis; D-glycero-alpha-D-manno-heptose 7-phosphate and D-glycero-beta-D-manno-heptose 7-phosphate from sedoheptulose 7-phosphate: step 1/1. Functionally, catalyzes the isomerization of sedoheptulose 7-phosphate in D-glycero-D-manno-heptose 7-phosphate. This is Phosphoheptose isomerase from Shewanella denitrificans (strain OS217 / ATCC BAA-1090 / DSM 15013).